A 1446-amino-acid chain; its full sequence is MAHSKTRTNDGKITYPPGVKEISDKISKEEMVRRLKMVVKTFMDMDQDSEEEKELYLNLALHLASDFFLKHPDKDVRLLVACCLADIFRIYAPEAPYTSPDKLKDIFMFITRQLKGLEDTKSPQFNRYFYLLENIAWVKSYNICFELEDSNEIFTQLYRTLFSVINNGHNQKVHMHMVDLMSSIICEGDTVSQELLDTVLVNLVPAHKNLNKQAYDLAKALLKRTAQAIEPYITNFFNQVLMLGKTSISDLSEHVFDLILELYNIDSHLLLSVLPQLEFKLKSNDNEERLQVVKLLAKMFGAKDSELASQNKPLWQCYLGRFNDIHVPIRLECVKFASHCLMNHPDLAKDLTEYLKVRSHDPEEAIRHDVIVSIVTAAKKDILLVNDHLLNFVRERTLDKRWRVRKEAMMGLAQIYKKYSLQSAAGKDAAKQISWVKDKLLHIYYQNSIDDRLLVERIFAQYMVPHNLETTERMKCLYYLYATLDLNAVKALNEMWKCQNLLRHQVKDLLDLIKQPKTDASVKAIFSKVMVITRNLPDPGKAQDFMKKFTQVLEDDEKIRKQLEALVSPTCSCKQAEGCVREITKKLGNPKQPTNPFLEMIKFLLERIAPVHIDTESISALIKQVNKSIDGTADDEDEGVPTDQAIRAGLELLKVLSFTHPISFHSAETFESLLACLKMDDEKVAEAALQIFKNTGSKIEEDFPHIRSALLPVLHHKSKKGPPRQAKYAIHCIHAIFSSKETQFAQIFEPLHKSLDPSNLEHLITPLVTIGHIALLAPDQFAAPLKSLVATFIVKDLLMNDRLPGKKTTKLWVPDEEVSPETMVKIQAIKMMVRWLLGMKNNHSKSGTSTLRLLTTILHSDGDLTEQGKISKPDMSRLRLAAGSAIVKLAQEPCYHEIITLEQYQLCALAINDECYQVRQVFAQKLHKGLSRLRLPLEYMAICALCAKDPVKERRAHARQCLVKNITVRREYLKQHAAVSEKLLSLLPEYVVPYTIHLLAHDPDYVKVQDIEQLKDVKECLWFVLEILMAKNENNSHAFIRKMVENIKQTKDAQGPDDTKMNEKLYTVCDVAMNIIMSKSTTYSLESPKDPVLPARFFTQPDKNFSNTKNYLPPEMKSFFTPGKPKTANVLGAVNKPLSSAGKQSQTKSSRMETVSNASSSSNPSSPGRIKGRLDSSEMDHSENEDYTMSSPLPGKKSDKREDPDLSELEKPRSRKKAPVTDPEEKLGMDDLTKLVQEQKPKGSQRGRKRGRTASDSDEQQWPEEKRHKEELLENEDEQNSPPKKGKRGRPPKPLGGGTSKEEPTMKTSKKGNKKKLVPPVVDDDEEEERQIGNTEHKSKSKQHRTSKRAQQRAESPETSAVESTQSTPQKGRGRPSKAPSPSQPPKKIRVGRSKQVATKENDSSEEMDVLQASSPVSDDTTQEGAEEEDISVGNVRRRSSKRERR.

The stretch at leucine 383 to tyrosine 419 is one HEAT repeat. Lysine 1136 carries the N6-acetyllysine modification. A compositionally biased stretch (polar residues) spans proline 1137–valine 1155. The tract at residues proline 1137–arginine 1446 is disordered. 6 positions are modified to phosphoserine: serine 1140, serine 1162, serine 1166, serine 1176, serine 1182, and serine 1191. Residues serine 1156–proline 1167 are compositionally biased toward low complexity. The segment covering glycine 1172–asparagine 1184 has biased composition (basic and acidic residues). Composition is skewed to basic and acidic residues over residues lysine 1196–proline 1212 and proline 1223–proline 1241. The segment covering glycine 1243 to arginine 1252 has biased composition (basic residues). Residues glycine 1247–glutamate 1259 constitute a DNA-binding region (a.T hook 1). The residue at position 1253 (threonine 1253) is a Phosphothreonine. Phosphoserine occurs at positions 1255 and 1257. Positions proline 1263 to leucine 1272 are enriched in basic and acidic residues. Residue serine 1281 is modified to Phosphoserine. Positions lysine 1285–glycine 1297 form a DNA-binding region, a.T hook 2. 2 stretches are compositionally biased toward basic residues: residues threonine 1308–leucine 1317 and serine 1339–glutamine 1351. Over residues arginine 1353–glutamine 1370 the composition is skewed to polar residues. Serine 1356 and serine 1364 each carry phosphoserine. Threonine 1365 bears the Phosphothreonine mark. Serine 1367 is modified (phosphoserine). A Phosphothreonine modification is found at threonine 1368. Positions glutamine 1370–proline 1382 form a DNA-binding region, a.T hook 3. Phosphoserine is present on residues serine 1381, serine 1415, and serine 1418. A compositionally biased stretch (acidic residues) spans threonine 1421–isoleucine 1431. Residues valine 1436–arginine 1446 show a composition bias toward basic residues.

The protein belongs to the PDS5 family. In terms of assembly, interacts with the cohesin complex. Interacts with RAD21; the interaction is direct. Interacts with WAPL (via FGF motifs) or CDCA5 (via the FGF motif); the interaction is direct, cohesin-dependent and competitive. Expressed in prostate.

Its subcellular location is the nucleus. Its function is as follows. Regulator of sister chromatid cohesion in mitosis which may stabilize cohesin complex association with chromatin. May couple sister chromatid cohesion during mitosis to DNA replication. Cohesion ensures that chromosome partitioning is accurate in both meiotic and mitotic cells and plays an important role in DNA repair. Plays a role in androgen-induced proliferative arrest in prostate cells. The sequence is that of Sister chromatid cohesion protein PDS5 homolog B (Pds5b) from Mus musculus (Mouse).